The sequence spans 511 residues: Colicin-B (511 aa).

Positions 17 to 24 (DTMVVWPS) match the TonB box motif. 2 helical membrane-spanning segments follow: residues 455–475 (MASAVALSLFSLTLGSALIAF) and 477–497 (LSATVVGFVGVVIAGAIGAFI).

Belongs to the channel forming colicin family.

It localises to the cell membrane. In terms of biological role, this colicin is a channel-forming colicin. This class of transmembrane toxins depolarize the cytoplasmic membrane, leading to dissipation of cellular energy. Its function is as follows. Colicins are polypeptide toxins produced by and active against E.coli and closely related bacteria. The sequence is that of Colicin-B (cba) from Escherichia coli.